Here is a 137-residue protein sequence, read N- to C-terminus: Methylglyoxal synthase (137 aa).

The MGS-like domain maps to 1-137; the sequence is MKIALIAHDK…NLVRGGEPNV (137 aa). Substrate contacts are provided by residues histidine 8, lysine 12, 34–37, and 54–55; these read TGTT and SG. The active-site Proton donor/acceptor is aspartate 60. Histidine 87 provides a ligand contact to substrate.

It belongs to the methylglyoxal synthase family.

It carries out the reaction dihydroxyacetone phosphate = methylglyoxal + phosphate. Functionally, catalyzes the formation of methylglyoxal from dihydroxyacetone phosphate. This chain is Methylglyoxal synthase, found in Bacillus velezensis (strain DSM 23117 / BGSC 10A6 / LMG 26770 / FZB42) (Bacillus amyloliquefaciens subsp. plantarum).